We begin with the raw amino-acid sequence, 413 residues long: Serine hydroxymethyltransferase (413 aa).

Residues Leu117 and 121–123 (GHL) each bind (6S)-5,6,7,8-tetrahydrofolate. Lys226 bears the N6-(pyridoxal phosphate)lysine mark. A (6S)-5,6,7,8-tetrahydrofolate-binding site is contributed by 349–351 (SPF).

The protein belongs to the SHMT family. In terms of assembly, homodimer. Requires pyridoxal 5'-phosphate as cofactor.

The protein localises to the cytoplasm. The enzyme catalyses (6R)-5,10-methylene-5,6,7,8-tetrahydrofolate + glycine + H2O = (6S)-5,6,7,8-tetrahydrofolate + L-serine. It participates in one-carbon metabolism; tetrahydrofolate interconversion. Its pathway is amino-acid biosynthesis; glycine biosynthesis; glycine from L-serine: step 1/1. Functionally, catalyzes the reversible interconversion of serine and glycine with tetrahydrofolate (THF) serving as the one-carbon carrier. This reaction serves as the major source of one-carbon groups required for the biosynthesis of purines, thymidylate, methionine, and other important biomolecules. Also exhibits THF-independent aldolase activity toward beta-hydroxyamino acids, producing glycine and aldehydes, via a retro-aldol mechanism. In Pelobacter propionicus (strain DSM 2379 / NBRC 103807 / OttBd1), this protein is Serine hydroxymethyltransferase.